The primary structure comprises 132 residues: AP-2 complex subunit sigma (132 aa).

Belongs to the adaptor complexes small subunit family. In terms of assembly, adaptor protein complex 2 (AP-2) is a heterotetramer composed of two large adaptins (alpha-type and beta-type subunits), a medium adaptin (mu-type subunit AP50) and a small adaptin (sigma-type subunit AP17). Widely expressed in the embryo, endosperm, leaf and root.

Its subcellular location is the cell membrane. The protein resides in the membrane. It localises to the coated pit. Functionally, component of the adaptor complexes which link clathrin to receptors in coated vesicles. Clathrin-associated protein complexes are believed to interact with the cytoplasmic tails of membrane proteins, leading to their selection and concentration. AP2S1/AP17 is a subunit of the plasma membrane adaptor. The complex binds polyphosphoinositides. The polypeptide is AP-2 complex subunit sigma (AP-17) (Zea mays (Maize)).